Here is a 396-residue protein sequence, read N- to C-terminus: S-adenosylmethionine synthase (396 aa).

Glu-11 is a Mg(2+) binding site. His-17 contributes to the ATP binding site. Glu-45 contributes to the K(+) binding site. 2 residues coordinate L-methionine: Glu-58 and Gln-101. Residues Asp-169 to Lys-171, Ser-237 to Phe-240, Asp-248, Arg-254 to Lys-255, Ala-271, Lys-275, and Lys-279 each bind ATP. Asp-248 provides a ligand contact to L-methionine. Lys-279 provides a ligand contact to L-methionine.

It belongs to the AdoMet synthase family. Homotetramer. The cofactor is Mn(2+). Requires Mg(2+) as cofactor. Co(2+) is required as a cofactor. K(+) serves as cofactor.

It localises to the cytoplasm. It catalyses the reaction L-methionine + ATP + H2O = S-adenosyl-L-methionine + phosphate + diphosphate. Its pathway is amino-acid biosynthesis; S-adenosyl-L-methionine biosynthesis; S-adenosyl-L-methionine from L-methionine: step 1/1. Catalyzes the formation of S-adenosylmethionine from methionine and ATP. The reaction comprises two steps that are both catalyzed by the same enzyme: formation of S-adenosylmethionine (AdoMet) and triphosphate, and subsequent hydrolysis of the triphosphate. The chain is S-adenosylmethionine synthase (SAMS) from Medicago sativa subsp. falcata (Sickle medic).